The primary structure comprises 263 residues: MFAPIDPVKIPVFSDPWITMATLSGYLLFVLKLGPKIMENRKPFHLSGVIRVYNIFQILYNGLILVLGVHFLFVLKAYQISCIVSLPMDHKYKDRERLICILYMLNKFVDLVETIFFVLRKKDRQISFLHVFHHFAMAFLGYLYYYFHGYGGVAFPQCLCLLNTAVHVIMYAYYYLSSISQELQRSLWWKKYITIAQLVQFGIILLHCTITLAQPDCAVNRPLTYGCGSLSAFFAVIFSQFYYHNYIKPGEKSSKQSAIHKNL.

The next 7 helical transmembrane spans lie at 10 to 30 (IPVFSDPWITMATLSGYLLFV), 55 to 75 (IFQILYNGLILVLGVHFLFVL), 98 to 118 (LICILYMLNKFVDLVETIFFV), 135 to 155 (FAMAFLGYLYYYFHGYGGVAF), 159 to 179 (LCLLNTAVHVIMYAYYYLSSI), 193 to 213 (ITIAQLVQFGIILLHCTITLA), and 223 to 243 (LTYGCGSLSAFFAVIFSQFYY).

Belongs to the ELO family. As to expression, no expression in adults.

It localises to the endoplasmic reticulum membrane. The catalysed reaction is a very-long-chain acyl-CoA + malonyl-CoA + H(+) = a very-long-chain 3-oxoacyl-CoA + CO2 + CoA. In terms of biological role, condensing enzyme that elongates saturated and monounsaturated very long chain fatty acids, to yield products up to 30 carbons in length. This is Very long chain fatty acid elongase F from Drosophila simulans (Fruit fly).